Here is a 639-residue protein sequence, read N- to C-terminus: Testicular spindle-associated protein SHCBP1L (639 aa).

Disordered stretches follow at residues 1 to 25 (MESDATTSEPKASVGSDSSPAEQTV) and 48 to 75 (VASPRPVKGKAARRRLQLPPVTQAETCD). Serine 3 is modified (O-acetylserine). Serine 8, serine 19, and serine 50 each carry phosphoserine. Positions 54–63 (VKGKAARRRL) are enriched in basic residues. Residues 285 to 312 (IAQRFKKTLEKYKNKRVELIEYQSNIKE) are a coiled coil. PbH1 repeat units lie at residues 479–500 (SGHLTLENCLLKCEGTGVCVLT), 501–523 (GASLTITNSEITGAQGAGVELYP), 524–557 (GSIAILEGNEIHHCNNLRTSDSSKSTLGGVNMKV), and 560–582 (APKLKMTNNHIYNNNGYGVSILQ). The residue at position 556 (lysine 556) is an N6-acetyllysine. At lysine 631 the chain carries N6-acetyllysine.

In terms of assembly, interacts with HSPA2; this interaction may promote the recruitment of HSPA2 to the spindle. Expressed in pachytene spermatocytes and elongating spermatids inside the seminiferous tubules. Not detected in ovary (at protein level). Testis-specific.

It localises to the cytoplasm. The protein localises to the cytoskeleton. The protein resides in the spindle. Testis-specific spindle-associated factor that plays a role in spermatogenesis. In association with HSPA2, participates in the maintenance of spindle integrity during meiosis in male germ cells. The polypeptide is Testicular spindle-associated protein SHCBP1L (Mus musculus (Mouse)).